Reading from the N-terminus, the 736-residue chain is 1,4-alpha-glucan branching enzyme GlgB (736 aa).

Asp419 serves as the catalytic Nucleophile. Catalysis depends on Glu472, which acts as the Proton donor.

Belongs to the glycosyl hydrolase 13 family. GlgB subfamily. In terms of assembly, monomer.

It carries out the reaction Transfers a segment of a (1-&gt;4)-alpha-D-glucan chain to a primary hydroxy group in a similar glucan chain.. It functions in the pathway glycan biosynthesis; glycogen biosynthesis. Functionally, catalyzes the formation of the alpha-1,6-glucosidic linkages in glycogen by scission of a 1,4-alpha-linked oligosaccharide from growing alpha-1,4-glucan chains and the subsequent attachment of the oligosaccharide to the alpha-1,6 position. The protein is 1,4-alpha-glucan branching enzyme GlgB of Rhizobium meliloti (strain 1021) (Ensifer meliloti).